The primary structure comprises 259 residues: MARIPKTLKFVVVIVAVLLPVLAYSATTARQEEVPQQTVAPQQQRHSFKGEECPAGSHRSEHTGACNPCTEGVDYTNASNNEPSCFPCTVCKSDQKHKSSCTMTRDTVCQCKEGTFRNENSPEMCRKCSRCPSGEVQVSNCTSWDDIQCVEEFGANATVETPAAEETMNTSPGTPAPAAEETMNTSPGTPAPAAEETMTTSPGTPAPAAEETMTTSPGTPAPAAEETMITSPGTPASSHYLSCTIVGIIVLIVLLIVFV.

Positions 1–25 are cleaved as a signal peptide; sequence MARIPKTLKFVVVIVAVLLPVLAYS. TNFR-Cys repeat units follow at residues 29-66, 69-109, and 110-149; these read ARQE…TGAC, CTEG…DTVC, and QCKE…DIQC. A compositionally biased stretch (polar residues) spans 30 to 45; that stretch reads RQEEVPQQTVAPQQQR. Residues 30 to 56 form a disordered region; that stretch reads RQEEVPQQTVAPQQQRHSFKGEECPAG. Cystine bridges form between C53/C66, C69/C85, C88/C101, C91/C109, C111/C125, C128/C141, and C131/C149. An N-linked (GlcNAc...) (high mannose) asparagine glycan is attached at N77. N-linked (GlcNAc...) (high mannose) asparagine glycans are attached at residues N140 and N156. A disordered region spans residues 160-224; that stretch reads ETPAAEETMN…TSPGTPAPAA (65 aa). TAPE repeat units follow at residues 162-176, 177-191, 192-206, 207-221, and 222-236; these read PAAE…GTPA. A compositionally biased stretch (low complexity) spans 185 to 217; that stretch reads TSPGTPAPAAEETMTTSPGTPAPAAEETMTTSP. The GPI-anchor amidated alanine moiety is linked to residue A236. A propeptide spans 237–259 (removed in mature form); the sequence is SSHYLSCTIVGIIVLIVLLIVFV.

N-glycosylated and O-glycosylated. As to expression, higher expression in normal tissues than in tumor cell lines. Highly expressed in peripheral blood lymphocytes, spleen, skeletal muscle, placenta, lung and heart.

The protein localises to the cell membrane. In terms of biological role, receptor for the cytotoxic ligand TRAIL. Lacks a cytoplasmic death domain and hence is not capable of inducing apoptosis. May protect cells against TRAIL mediated apoptosis by competing with TRAIL-R1 and R2 for binding to the ligand. This chain is Tumor necrosis factor receptor superfamily member 10C (TNFRSF10C), found in Homo sapiens (Human).